A 104-amino-acid chain; its full sequence is MELSNTESIAGKEVVETLGLVRGNTVRARNVGRDITQGLRNLAGGELKGYTELMTDARDQAQDRMIEEAEALGADGVINVRFTTSSIADSGAEILAYGTAVRLR.

This sequence belongs to the UPF0145 family.

The sequence is that of UPF0145 protein Hlac_1015 from Halorubrum lacusprofundi (strain ATCC 49239 / DSM 5036 / JCM 8891 / ACAM 34).